Consider the following 275-residue polypeptide: Elongation factor Ts (275 aa).

Residues 76–79 (TDFV) are involved in Mg(2+) ion dislocation from EF-Tu.

The protein belongs to the EF-Ts family.

It is found in the cytoplasm. Associates with the EF-Tu.GDP complex and induces the exchange of GDP to GTP. It remains bound to the aminoacyl-tRNA.EF-Tu.GTP complex up to the GTP hydrolysis stage on the ribosome. The chain is Elongation factor Ts from Salinispora tropica (strain ATCC BAA-916 / DSM 44818 / JCM 13857 / NBRC 105044 / CNB-440).